A 115-amino-acid chain; its full sequence is Aspartate 1-decarboxylase (115 aa).

The active-site Schiff-base intermediate with substrate; via pyruvic acid is Ser-25. The residue at position 25 (Ser-25) is a Pyruvic acid (Ser). Thr-57 lines the substrate pocket. The active-site Proton donor is the Tyr-58. 73-75 is a binding site for substrate; sequence GAA.

It belongs to the PanD family. Heterooctamer of four alpha and four beta subunits. The cofactor is pyruvate. Post-translationally, is synthesized initially as an inactive proenzyme, which is activated by self-cleavage at a specific serine bond to produce a beta-subunit with a hydroxyl group at its C-terminus and an alpha-subunit with a pyruvoyl group at its N-terminus.

The protein localises to the cytoplasm. It catalyses the reaction L-aspartate + H(+) = beta-alanine + CO2. It functions in the pathway cofactor biosynthesis; (R)-pantothenate biosynthesis; beta-alanine from L-aspartate: step 1/1. Its function is as follows. Catalyzes the pyruvoyl-dependent decarboxylation of aspartate to produce beta-alanine. The polypeptide is Aspartate 1-decarboxylase (Kosmotoga olearia (strain ATCC BAA-1733 / DSM 21960 / TBF 19.5.1)).